Here is a 316-residue protein sequence, read N- to C-terminus: Pantothenate kinase (316 aa).

Residue 95–102 participates in ATP binding; sequence GSVAVGKS.

The protein belongs to the prokaryotic pantothenate kinase family.

Its subcellular location is the cytoplasm. It carries out the reaction (R)-pantothenate + ATP = (R)-4'-phosphopantothenate + ADP + H(+). The protein operates within cofactor biosynthesis; coenzyme A biosynthesis; CoA from (R)-pantothenate: step 1/5. The sequence is that of Pantothenate kinase from Shigella dysenteriae serotype 1 (strain Sd197).